The following is a 326-amino-acid chain: MIRPSSLVLAAALGTAALPARAEVPRVVTDIPVVGAMVQQVMGDLGQPEILLQAGGDPHSYQLRPSQARSLQDADLLIWVGPELTPWLERAATSLSAQSEMLALLDLPATHRRDYAGGEHEHEHEHEHEHEHEHEHDGHGHAEEQAHHDHDHSGTDPHAWLDPANGQAWLAGIAETLSRHDPDNAGVYAANAAKAADEIAALDEELKSALTPTQGKRFVVFHDAYGYFTEHYGLEPAIAVSLGDASTPSAARLRAIRDEIAEEGAVCAFPEANHDPKLIAAVIEGSEIRQGAALDPEGTGATPGAGLYAELLRGMGQALADCLGAD.

Residues 1-22 form the signal peptide; the sequence is MIRPSSLVLAAALGTAALPARA. His59 lines the Zn(2+) pocket. Positions 117–155 are enriched in basic and acidic residues; that stretch reads GGEHEHEHEHEHEHEHEHEHDGHGHAEEQAHHDHDHSGT. Positions 117–161 are disordered; it reads GGEHEHEHEHEHEHEHEHEHDGHGHAEEQAHHDHDHSGTDPHAWL. His158, His222, and Asp295 together coordinate Zn(2+). Cys267 and Cys322 are joined by a disulfide.

The protein belongs to the bacterial solute-binding protein 9 family. In terms of assembly, monomer.

The protein resides in the periplasm. Functionally, part of the ATP-binding cassette (ABC) transport system ZnuABC involved in zinc import. Binds zinc with high affinity and specificity and delivers it to the membrane permease for translocation into the cytoplasm. The sequence is that of High-affinity zinc uptake system protein ZnuA from Paracoccus denitrificans (strain Pd 1222).